The sequence spans 906 residues: MLSILKKLFGTANDRTVKKLFSEITKINSLEPAIQKLSDEELKNKTVEFKEKLKNGATLDDIVYEAFAVVREAAKRVCGMRHFDVQLIGGLILHRGMITEMRTGEGKTLVATLPAYLNALTGKGVHVVTVNDYLARRDSAAMGKIYNFLGLSVGCIVGGMPDEVKRAAYNADITHATNNELGFDYLRDNMKYSLQERVLRPFNFAIIDEVDSILIDEARTPLVISGPVNDNAELYGKIDKIVRLLNASDFEKDEKLKTINLTETGITHIESLLSKENIIKPDTSLYDFENLTLVHYINQALRAHNMFTVNVDYLVREGKVMIIDEFTGRVMEGRRYSEGLHQALEAKENVKIQNENQTLASITFQNYFRNYPKLSGMTGTAMTEAPELKDIYNLDVVAVPTHNKVTRLDLDDEIYGSKKEKYDAILKLIRDCYDRGQPILVGTISIEKSEELSSVLNKENIPHKVLNAKFHEQEAFIIAQAGRFKAVTIATNMAGRGTDIMLGGNPEMLIEQLDKEHNYEAKIAEIKAQIAEEKKQVIEAGGLFVIGTERHESRRIDNQLRGRSGRQGDPGKTKFFLSLDDDLMRIFASDRISGVLRTLGLKDGEAIHHPMISRSLEKAQQKVEGHNYEMRKNLLRFDDVMNDQRKIIYEQRTEIIKSKDSHGFLNSTTEELAKKIVLTFMPVGSYREDWDIENLSVELHRVFSIKFDHNVVSKNDVTEEEITKTVIQMAHDIYKSKEEAYSSELMHNAVKYILLTTLDQVWKDHLYSLDHLRQGISLRAYGQKDPLSEYKREAFNLFEQMLNNLKELFIQTVYHFHIDLKNVQKEDVSLEYKKLQKNMCESREDPAFSKYNAGSSLETDLKPVVSRIDPKDRNPDDPTSWGRVSRNELCPCGSGKKYKYCHGANE.

ATP is bound by residues Gln86, 104–108 (GEGKT), and Asp499. The disordered stretch occupies residues 863 to 887 (PVVSRIDPKDRNPDDPTSWGRVSRN). Residues Cys890, Cys892, Cys901, and His902 each coordinate Zn(2+).

Belongs to the SecA family. In terms of assembly, monomer and homodimer. Part of the essential Sec protein translocation apparatus which comprises SecA, SecYEG and auxiliary proteins SecDF-YajC and YidC. It depends on Zn(2+) as a cofactor.

The protein resides in the cell inner membrane. Its subcellular location is the cytoplasm. It carries out the reaction ATP + H2O + cellular proteinSide 1 = ADP + phosphate + cellular proteinSide 2.. Its function is as follows. Part of the Sec protein translocase complex. Interacts with the SecYEG preprotein conducting channel. Has a central role in coupling the hydrolysis of ATP to the transfer of proteins into and across the cell membrane, serving both as a receptor for the preprotein-SecB complex and as an ATP-driven molecular motor driving the stepwise translocation of polypeptide chains across the membrane. This is Protein translocase subunit SecA from Rickettsia rickettsii (strain Iowa).